A 549-amino-acid polypeptide reads, in one-letter code: Glucose-6-phosphate isomerase (549 aa).

Catalysis depends on E355, which acts as the Proton donor. Active-site residues include H386 and K514.

It belongs to the GPI family.

It localises to the cytoplasm. It catalyses the reaction alpha-D-glucose 6-phosphate = beta-D-fructose 6-phosphate. Its pathway is carbohydrate biosynthesis; gluconeogenesis. It participates in carbohydrate degradation; glycolysis; D-glyceraldehyde 3-phosphate and glycerone phosphate from D-glucose: step 2/4. Its function is as follows. Catalyzes the reversible isomerization of glucose-6-phosphate to fructose-6-phosphate. This chain is Glucose-6-phosphate isomerase, found in Salmonella enteritidis PT4 (strain P125109).